A 126-amino-acid polypeptide reads, in one-letter code: Large ribosomal subunit protein bL19 (126 aa).

It belongs to the bacterial ribosomal protein bL19 family.

In terms of biological role, this protein is located at the 30S-50S ribosomal subunit interface and may play a role in the structure and function of the aminoacyl-tRNA binding site. In Gluconacetobacter diazotrophicus (strain ATCC 49037 / DSM 5601 / CCUG 37298 / CIP 103539 / LMG 7603 / PAl5), this protein is Large ribosomal subunit protein bL19.